The following is a 455-amino-acid chain: Bifunctional protein GlmU (455 aa).

Positions 1-230 (MVNKNAIILA…FDESMGVNDR (230 aa)) are pyrophosphorylase. UDP-N-acetyl-alpha-D-glucosamine contacts are provided by residues 9–12 (LAAG), Lys23, Gln73, 78–79 (GT), 101–103 (SGD), Gly140, Glu155, Asn170, and Asn228. Position 103 (Asp103) interacts with Mg(2+). Asn228 serves as a coordination point for Mg(2+). Residues 231 to 251 (SALAKATKIMQKRINTQLMKD) form a linker region. An N-acetyltransferase region spans residues 252 to 455 (GVTLVDPETA…KPGYAKKLPW (204 aa)). Arg333 and Lys351 together coordinate UDP-N-acetyl-alpha-D-glucosamine. His363 (proton acceptor) is an active-site residue. Positions 366 and 377 each coordinate UDP-N-acetyl-alpha-D-glucosamine. Residues 386-387 (NY), Ser405, Ala423, and Arg440 each bind acetyl-CoA.

In the N-terminal section; belongs to the N-acetylglucosamine-1-phosphate uridyltransferase family. It in the C-terminal section; belongs to the transferase hexapeptide repeat family. Homotrimer. Requires Mg(2+) as cofactor.

It is found in the cytoplasm. It carries out the reaction alpha-D-glucosamine 1-phosphate + acetyl-CoA = N-acetyl-alpha-D-glucosamine 1-phosphate + CoA + H(+). It catalyses the reaction N-acetyl-alpha-D-glucosamine 1-phosphate + UTP + H(+) = UDP-N-acetyl-alpha-D-glucosamine + diphosphate. It functions in the pathway nucleotide-sugar biosynthesis; UDP-N-acetyl-alpha-D-glucosamine biosynthesis; N-acetyl-alpha-D-glucosamine 1-phosphate from alpha-D-glucosamine 6-phosphate (route II): step 2/2. Its pathway is nucleotide-sugar biosynthesis; UDP-N-acetyl-alpha-D-glucosamine biosynthesis; UDP-N-acetyl-alpha-D-glucosamine from N-acetyl-alpha-D-glucosamine 1-phosphate: step 1/1. The protein operates within bacterial outer membrane biogenesis; LPS lipid A biosynthesis. Functionally, catalyzes the last two sequential reactions in the de novo biosynthetic pathway for UDP-N-acetylglucosamine (UDP-GlcNAc). The C-terminal domain catalyzes the transfer of acetyl group from acetyl coenzyme A to glucosamine-1-phosphate (GlcN-1-P) to produce N-acetylglucosamine-1-phosphate (GlcNAc-1-P), which is converted into UDP-GlcNAc by the transfer of uridine 5-monophosphate (from uridine 5-triphosphate), a reaction catalyzed by the N-terminal domain. The protein is Bifunctional protein GlmU of Limosilactobacillus fermentum (strain NBRC 3956 / LMG 18251) (Lactobacillus fermentum).